The following is a 66-amino-acid chain: Large ribosomal subunit protein bL35 (66 aa).

It belongs to the bacterial ribosomal protein bL35 family.

The sequence is that of Large ribosomal subunit protein bL35 from Ruegeria pomeroyi (strain ATCC 700808 / DSM 15171 / DSS-3) (Silicibacter pomeroyi).